A 681-amino-acid polypeptide reads, in one-letter code: Potassium-transporting ATPase ATP-binding subunit (681 aa).

A run of 4 helical transmembrane segments spans residues 37–57 (MFVV…PTYF), 64–84 (VGYN…ANFA), 218–238 (IALT…VMTL), and 255–275 (IALL…AIGI). The 4-aspartylphosphate intermediate role is filled by D306. Residues D343, E347, 375–382 (FSAETRMS), and K394 each bind ATP. The Mg(2+) site is built by D517 and D521. The next 3 membrane-spanning stretches (helical) occupy residues 573 to 595 (ALTT…AIIS), 615 to 635 (AILS…PIAM), and 655 to 675 (IYGL…DMII).

It belongs to the cation transport ATPase (P-type) (TC 3.A.3) family. Type IA subfamily. The system is composed of three essential subunits: KdpA, KdpB and KdpC.

The protein resides in the cell membrane. The enzyme catalyses K(+)(out) + ATP + H2O = K(+)(in) + ADP + phosphate + H(+). Functionally, part of the high-affinity ATP-driven potassium transport (or Kdp) system, which catalyzes the hydrolysis of ATP coupled with the electrogenic transport of potassium into the cytoplasm. This subunit is responsible for energy coupling to the transport system and for the release of the potassium ions to the cytoplasm. The protein is Potassium-transporting ATPase ATP-binding subunit of Caldanaerobacter subterraneus subsp. tengcongensis (strain DSM 15242 / JCM 11007 / NBRC 100824 / MB4) (Thermoanaerobacter tengcongensis).